We begin with the raw amino-acid sequence, 288 residues long: Polyamine aminopropyltransferase (288 aa).

A PABS domain is found at 9–238 (ETLHDQFGQY…GIMTFAWATD (230 aa)). Gln33 lines the S-methyl-5'-thioadenosine pocket. 2 residues coordinate spermidine: His64 and Asp88. S-methyl-5'-thioadenosine is bound by residues Glu108 and 140–141 (DG). Asp158 serves as the catalytic Proton acceptor. 158–161 (DCTD) lines the spermidine pocket. Pro165 provides a ligand contact to S-methyl-5'-thioadenosine.

The protein belongs to the spermidine/spermine synthase family. Homodimer or homotetramer.

The protein resides in the cytoplasm. The catalysed reaction is S-adenosyl 3-(methylsulfanyl)propylamine + putrescine = S-methyl-5'-thioadenosine + spermidine + H(+). Its pathway is amine and polyamine biosynthesis; spermidine biosynthesis; spermidine from putrescine: step 1/1. Its function is as follows. Catalyzes the irreversible transfer of a propylamine group from the amino donor S-adenosylmethioninamine (decarboxy-AdoMet) to putrescine (1,4-diaminobutane) to yield spermidine. This chain is Polyamine aminopropyltransferase, found in Escherichia coli (strain ATCC 8739 / DSM 1576 / NBRC 3972 / NCIMB 8545 / WDCM 00012 / Crooks).